The following is a 224-amino-acid chain: dTTP/UTP pyrophosphatase (224 aa).

Aspartate 77 acts as the Proton acceptor in catalysis.

This sequence belongs to the Maf family. YhdE subfamily. A divalent metal cation is required as a cofactor.

Its subcellular location is the cytoplasm. The enzyme catalyses dTTP + H2O = dTMP + diphosphate + H(+). It catalyses the reaction UTP + H2O = UMP + diphosphate + H(+). In terms of biological role, nucleoside triphosphate pyrophosphatase that hydrolyzes dTTP and UTP. May have a dual role in cell division arrest and in preventing the incorporation of modified nucleotides into cellular nucleic acids. This is dTTP/UTP pyrophosphatase from Dehalococcoides mccartyi (strain ATCC BAA-2266 / KCTC 15142 / 195) (Dehalococcoides ethenogenes (strain 195)).